Reading from the N-terminus, the 730-residue chain is Acetylene hydratase (730 aa).

Positions 9 and 12 each coordinate [4Fe-4S] cluster. The active site involves aspartate 13. Residues cysteine 16 and cysteine 46 each contribute to the [4Fe-4S] cluster site. W-bis(molybdopterin guanine dinucleotide) is bound by residues lysine 48, 111-114, cysteine 141, 172-173, 177-179, 199-202, 218-221, serine 296, glutamine 300, 416-418, 422-423, 442-444, aspartate 460, arginine 465, 602-613, arginine 606, histidine 676, aspartate 699, and arginine 720; these read TEIN, KN, HNW, LDPR, YGTD, ASN, GY, YDQ, and FAGLREDSNFQS.

It belongs to the prokaryotic molybdopterin-containing oxidoreductase family. Monomer. The cofactor is [4Fe-4S] cluster. Requires W-bis(molybdopterin guanine dinucleotide) as cofactor.

It carries out the reaction acetaldehyde = acetylene + H2O. In terms of biological role, catalyzes the hydration of acetylene to form acetaldehyde. Ethylene cannot act as a substrate. In Syntrophotalea acetylenica (Pelobacter acetylenicus), this protein is Acetylene hydratase.